A 208-amino-acid polypeptide reads, in one-letter code: Ribosomal RNA large subunit methyltransferase E (208 aa).

S-adenosyl-L-methionine contacts are provided by G63, W65, D83, D99, and D124. The active-site Proton acceptor is the K164.

This sequence belongs to the class I-like SAM-binding methyltransferase superfamily. RNA methyltransferase RlmE family.

It localises to the cytoplasm. It carries out the reaction uridine(2552) in 23S rRNA + S-adenosyl-L-methionine = 2'-O-methyluridine(2552) in 23S rRNA + S-adenosyl-L-homocysteine + H(+). In terms of biological role, specifically methylates the uridine in position 2552 of 23S rRNA at the 2'-O position of the ribose in the fully assembled 50S ribosomal subunit. The chain is Ribosomal RNA large subunit methyltransferase E from Alcanivorax borkumensis (strain ATCC 700651 / DSM 11573 / NCIMB 13689 / SK2).